The primary structure comprises 556 residues: MLNLCHALRGVRQFSCSVIVKVKCASCSIKLQDQDPSKPGYYTKPKSLPDSKLNPDLQDLKYLLFSQDIQLSKQAIQNDPDLKTKRDLLLRVICKRCSNALHHNNYNPEEFPESTLNDILNYVPRGSNVMHIVPFVEFPLHLDPNVLKRNDLDTTLVLTKSDQVFKDKNAVSKKVPIFMKQFLKNTLRIDSNKTFAISALKNWNISMFYNYFKNYTYLLGNPNVGKSTLINTLLQKYLGYKVKIDSTGKINSPSEEVMQEAFTNPKNFFKIQAAGVSHIPNLTRSVQAYQVGGKILFDLPGYSTSTSRLRLEEPIDERWLQRLRKTDLFNRKHIKQKTYESMKGTSQGGCYTVGGIFYLVPPKGSINQIVKYIPGPSKTFKNIEKGIDVFNSCNSSSGTHPLSRYCGIKSVICEKSQYKRYAIPPFIGSIEIVLKDIGYILLRTTGRYEFKGLHEIWIPRGIQVGIREPLENLIESGYQRYIETNGKESSCPRDRPIISSLYEMAPDEADTLNAVKKSYLEKTEKDLSARRFVDDDPYDLVQHLEKKKNPYWYYQW.

The transit peptide at 1-21 (MLNLCHALRGVRQFSCSVIVK) directs the protein to the mitochondrion. In terms of domain architecture, CP-type G spans 113–305 (ESTLNDILNY…LFDLPGYSTS (193 aa)).

Belongs to the TRAFAC class YlqF/YawG GTPase family. GEP3 subfamily.

It is found in the mitochondrion. Functionally, interacts genetically with prohibitins and thus may be involved in the mitochondrial lipid metabolism. The chain is Genetic interactor of prohibitins 3, mitochondrial (GEP3) from Saccharomyces cerevisiae (strain JAY291) (Baker's yeast).